Reading from the N-terminus, the 374-residue chain is Aminomethyltransferase (374 aa).

The protein belongs to the GcvT family. The glycine cleavage system is composed of four proteins: P, T, L and H.

The enzyme catalyses N(6)-[(R)-S(8)-aminomethyldihydrolipoyl]-L-lysyl-[protein] + (6S)-5,6,7,8-tetrahydrofolate = N(6)-[(R)-dihydrolipoyl]-L-lysyl-[protein] + (6R)-5,10-methylene-5,6,7,8-tetrahydrofolate + NH4(+). In terms of biological role, the glycine cleavage system catalyzes the degradation of glycine. The sequence is that of Aminomethyltransferase from Prochlorococcus marinus (strain MIT 9313).